The chain runs to 419 residues: Serine--tRNA ligase (419 aa).

The interval 45–66 (ADSLRAEQKAASKSVGGASPEE) is disordered. 226 to 228 (TSE) contacts L-serine. ATP is bound by residues 257–259 (RRE) and V273. E280 contributes to the L-serine binding site. Residue 344–347 (ELTS) participates in ATP binding. T379 lines the L-serine pocket.

It belongs to the class-II aminoacyl-tRNA synthetase family. Type-1 seryl-tRNA synthetase subfamily. As to quaternary structure, homodimer. The tRNA molecule binds across the dimer.

The protein resides in the cytoplasm. The catalysed reaction is tRNA(Ser) + L-serine + ATP = L-seryl-tRNA(Ser) + AMP + diphosphate + H(+). It catalyses the reaction tRNA(Sec) + L-serine + ATP = L-seryl-tRNA(Sec) + AMP + diphosphate + H(+). It participates in aminoacyl-tRNA biosynthesis; selenocysteinyl-tRNA(Sec) biosynthesis; L-seryl-tRNA(Sec) from L-serine and tRNA(Sec): step 1/1. Functionally, catalyzes the attachment of serine to tRNA(Ser). Is also able to aminoacylate tRNA(Sec) with serine, to form the misacylated tRNA L-seryl-tRNA(Sec), which will be further converted into selenocysteinyl-tRNA(Sec). The protein is Serine--tRNA ligase of Mycobacterium ulcerans (strain Agy99).